Here is a 287-residue protein sequence, read N- to C-terminus: uncharacterized protein (287 aa).

7 helical membrane-spanning segments follow: residues 27–47 (LTFS…FGVQ), 66–86 (LGTI…VTAF), 97–117 (WFWG…GVLL), 135–155 (IVFA…LSAL), 171–191 (IFIW…VLNF), 205–225 (LFPG…VYFV), and 254–274 (SALF…YFIL).

The protein resides in the cell membrane. This is an uncharacterized protein from Mycoplasma pneumoniae (strain ATCC 29342 / M129 / Subtype 1) (Mycoplasmoides pneumoniae).